The primary structure comprises 154 residues: Protein X (154 aa).

Positions 68 to 117 (PCALRFTSARRMETTVNAHQFLPKVLHKRTLGLSVMSTTDLEAYFKDCLF) are mitochondrial targeting sequence.

The protein belongs to the orthohepadnavirus protein X family. May form homodimer. May interact with host CEBPA, CFLAR, CREB1, DDB1, E4F1, HBXIP, HSPD1/HSP60, NFKBIA, POLR2E and SMAD4. Interacts with host SMC5-SMC6 complex and induces its degradation. Interacts with host TRPC4AP; leading to prevent ubiquitination of TRPC4AP. Interacts with host PLSCR1; this interaction promotes ubiquitination and degradation of HBx and impairs HBx-mediated cell proliferation. Post-translationally, a fraction may be phosphorylated in insect cells and HepG2 cells, a human hepatoblastoma cell line. Phosphorylated in vitro by host protein kinase C or mitogen-activated protein kinase. N-acetylated in insect cells.

The protein localises to the host cytoplasm. Its subcellular location is the host nucleus. It localises to the host mitochondrion. Functionally, multifunctional protein that plays a role in silencing host antiviral defenses and promoting viral transcription. Does not seem to be essential for HBV infection. May be directly involved in development of cirrhosis and liver cancer (hepatocellular carcinoma). Most of cytosolic activities involve modulation of cytosolic calcium. The effect on apoptosis is controversial depending on the cell types in which the studies have been conducted. May induce apoptosis by localizing in mitochondria and causing loss of mitochondrial membrane potential. May also modulate apoptosis by binding host CFLAR, a key regulator of the death-inducing signaling complex (DISC). Promotes viral transcription by using the host E3 ubiquitin ligase DDB1 to target the SMC5-SMC6 complex to proteasomal degradation. This host complex would otherwise bind to viral episomal DNA, and prevents its transcription. Moderately stimulates transcription of many different viral and cellular transcription elements. Promoters and enhancers stimulated by HBx contain DNA binding sites for NF-kappa-B, AP-1, AP-2, c-EBP, ATF/CREB, or the calcium-activated factor NF-AT. The chain is Protein X from Hepatitis B virus genotype D (isolate France/alpha1/1989) (HBV-D).